A 232-amino-acid polypeptide reads, in one-letter code: LexA repressor (232 aa).

Positions 26-46 (FDEMKDALDLRSKSGIHRLIT) form a DNA-binding region, H-T-H motif. Catalysis depends on for autocatalytic cleavage activity residues S153 and K191.

It belongs to the peptidase S24 family. In terms of assembly, homodimer.

The enzyme catalyses Hydrolysis of Ala-|-Gly bond in repressor LexA.. Represses a number of genes involved in the response to DNA damage (SOS response), including recA and lexA. In the presence of single-stranded DNA, RecA interacts with LexA causing an autocatalytic cleavage which disrupts the DNA-binding part of LexA, leading to derepression of the SOS regulon and eventually DNA repair. The protein is LexA repressor of Afipia carboxidovorans (strain ATCC 49405 / DSM 1227 / KCTC 32145 / OM5) (Oligotropha carboxidovorans).